Consider the following 239-residue polypeptide: Ribosomal RNA small subunit methyltransferase G (239 aa).

Residues Gly-75, Leu-80, 126–127 (AE), and Arg-142 each bind S-adenosyl-L-methionine.

This sequence belongs to the methyltransferase superfamily. RNA methyltransferase RsmG family.

It localises to the cytoplasm. Its function is as follows. Specifically methylates the N7 position of guanine in position 518 of 16S rRNA. In Streptomyces coelicolor (strain ATCC BAA-471 / A3(2) / M145), this protein is Ribosomal RNA small subunit methyltransferase G.